Consider the following 311-residue polypeptide: N-acetylmuramic acid 6-phosphate etherase (311 aa).

The SIS domain occupies 64–227 (IYQRLIDNGR…SSGVMIKLGK (164 aa)). Glu-92 (proton donor) is an active-site residue. Glu-123 is a catalytic residue.

Belongs to the GCKR-like family. MurNAc-6-P etherase subfamily. As to quaternary structure, homodimer.

The catalysed reaction is N-acetyl-D-muramate 6-phosphate + H2O = N-acetyl-D-glucosamine 6-phosphate + (R)-lactate. It functions in the pathway amino-sugar metabolism; N-acetylmuramate degradation. Its function is as follows. Specifically catalyzes the cleavage of the D-lactyl ether substituent of MurNAc 6-phosphate, producing GlcNAc 6-phosphate and D-lactate. The protein is N-acetylmuramic acid 6-phosphate etherase of Prochlorococcus marinus (strain SARG / CCMP1375 / SS120).